The sequence spans 426 residues: C2H2 type master regulator of conidiophore development brlA (426 aa).

Disordered stretches follow at residues 25 to 71 (CPSM…DRGT) and 281 to 302 (GVRL…KQSL). Positions 30–44 (SSFSPLESPTPTPTS) are enriched in low complexity. Over residues 45–58 (IYSQGSLASPSWPE) the composition is skewed to polar residues. A compositionally biased stretch (basic residues) spans 288–297 (PSRKMARKQP). 2 consecutive C2H2-type zinc fingers follow at residues 316–340 (FKCK…MKSH) and 346–371 (HVCW…TKTH). Residues 384-426 (LDETSPDYNPDYRGPLTADGRPMPGGTLDESMPSREISMEWDE) form a disordered region.

It localises to the nucleus. BrlA, abaA and wetA are pivotal regulators of conidiophore development and conidium maturation. They act individually and together to regulate their own expression and that of numerous other sporulation-specific genes. Binds promoters of target genes at brlA response elements (BREs) containing the conserved sequence 5'-(C/A)(A/G)AGGG(G/A)-3'. Positively regulates expression of the gliotoxin biosynthetic gene cluster in actively growing vegetative cells, and likely bridges morphological and chemical development during the life-cycle. Regulates (directly or indirectly) the ergot cluster genes. Positively regulates expression of the fumiquinazoline C biosynthetic gene cluster. Positively regulates expression of the melanin biosynthetic gene cluster. Mediates repression of ribosomal protein gene expression in response to nitrogen depletion. The chain is C2H2 type master regulator of conidiophore development brlA from Aspergillus fumigatus (strain ATCC MYA-4609 / CBS 101355 / FGSC A1100 / Af293) (Neosartorya fumigata).